The chain runs to 178 residues: Cytochrome c-type biogenesis protein CcmE (178 aa).

The Cytoplasmic portion of the chain corresponds to 1–8 (MNPRRKKR). The chain crosses the membrane as a helical; Signal-anchor for type II membrane protein span at residues 9 to 29 (LAIVGSILIGIGVVSGLVLYA). The Periplasmic segment spans residues 30-178 (LSQNIDLFFT…QLESKKTNSY (149 aa)). Residues His-143 and Tyr-147 each coordinate heme. The disordered stretch occupies residues 154–178 (EAAGQKHDKATYSDKQLESKKTNSY). The segment covering 157–178 (GQKHDKATYSDKQLESKKTNSY) has biased composition (basic and acidic residues).

This sequence belongs to the CcmE/CycJ family.

It localises to the cell inner membrane. Heme chaperone required for the biogenesis of c-type cytochromes. Transiently binds heme delivered by CcmC and transfers the heme to apo-cytochromes in a process facilitated by CcmF and CcmH. This is Cytochrome c-type biogenesis protein CcmE from Colwellia psychrerythraea (strain 34H / ATCC BAA-681) (Vibrio psychroerythus).